The chain runs to 509 residues: Heat shock 70 kDa protein 14 (509 aa).

This sequence belongs to the heat shock protein 70 family. In terms of assembly, component of ribosome-associated complex (RAC), a heterodimer composed of Hsp70/DnaK-type chaperone HSPA14 and Hsp40/DnaJ-type chaperone DNAJC2.

The protein localises to the cytoplasm. The protein resides in the cytosol. Its function is as follows. Component of the ribosome-associated complex (RAC), a complex involved in folding or maintaining nascent polypeptides in a folding-competent state. In the RAC complex, binds to the nascent polypeptide chain, while DNAJC2 stimulates its ATPase activity. The protein is Heat shock 70 kDa protein 14 (Hspa14) of Mus musculus (Mouse).